Here is a 208-residue protein sequence, read N- to C-terminus: Probable GTP-binding protein EngB (208 aa).

The EngB-type G domain occupies 18–187 (KQFEICVIGR…FALMKKVVIE (170 aa)). GTP contacts are provided by residues 26 to 33 (GRSNVGKS), 52 to 56 (GRTQL), 69 to 72 (DLPG), 135 to 138 (NKVD), and 166 to 168 (VSA). Residues S33 and T54 each contribute to the Mg(2+) site.

Belongs to the TRAFAC class TrmE-Era-EngA-EngB-Septin-like GTPase superfamily. EngB GTPase family. Mg(2+) is required as a cofactor.

Its function is as follows. Necessary for normal cell division and for the maintenance of normal septation. The polypeptide is Probable GTP-binding protein EngB (Ureaplasma urealyticum serovar 10 (strain ATCC 33699 / Western)).